Here is a 469-residue protein sequence, read N- to C-terminus: 3-isopropylmalate dehydratase large subunit (469 aa).

[4Fe-4S] cluster-binding residues include Cys-349, Cys-410, and Cys-413.

This sequence belongs to the aconitase/IPM isomerase family. LeuC type 1 subfamily. Heterodimer of LeuC and LeuD. The cofactor is [4Fe-4S] cluster.

It carries out the reaction (2R,3S)-3-isopropylmalate = (2S)-2-isopropylmalate. It functions in the pathway amino-acid biosynthesis; L-leucine biosynthesis; L-leucine from 3-methyl-2-oxobutanoate: step 2/4. Its function is as follows. Catalyzes the isomerization between 2-isopropylmalate and 3-isopropylmalate, via the formation of 2-isopropylmaleate. The polypeptide is 3-isopropylmalate dehydratase large subunit (Neisseria gonorrhoeae (strain ATCC 700825 / FA 1090)).